The chain runs to 549 residues: Cation/acetate symporter ActP (549 aa).

The next 13 helical transmembrane spans lie at 33 to 53, 77 to 97, 103 to 123, 148 to 168, 183 to 203, 206 to 226, 262 to 282, 303 to 323, 355 to 375, 404 to 424, 428 to 448, 464 to 484, and 493 to 513; these read WQAI…TYWA, LAIA…ALVF, GLIY…LIAE, ILSA…QMVG, IAVV…GMLA, WVQI…AFMV, ISAL…PHIL, GFMG…IMLV, LFLG…VAGL, VSKI…MLFE, IAFM…PIIL, GGWL…TIWV, and IFPY…GIWF.

This sequence belongs to the sodium:solute symporter (SSF) (TC 2.A.21) family.

The protein resides in the cell inner membrane. Transports acetate. The polypeptide is Cation/acetate symporter ActP (Shigella boydii serotype 4 (strain Sb227)).